The sequence spans 734 residues: Cleavage stimulation factor subunit 77 (734 aa).

12 HAT repeats span residues serine 20 to alanine 52, asparagine 54 to lysine 85, glutamate 93 to serine 128, histidine 139 to threonine 172, glutamate 198 to glycine 237, serine 246 to lysine 278, glycine 280 to serine 312, glycine 314 to arginine 345, glutamate 347 to cysteine 379, lysine 382 to arginine 414, asparagine 416 to threonine 450, and glutamate 474 to histidine 505. Residues valine 637–glycine 734 are disordered. Positions leucine 664–aspartate 677 are enriched in basic and acidic residues. Over residues alanine 709–glycine 734 the composition is skewed to polar residues.

As to quaternary structure, homodimer. Belongs to the CSTF complex. Forms a complex with cleavage and polyadenylation specificity factor (CPSF) subunits CPSF30, CSTF64, PCFS1, PCFS5 and FIPS5.

The protein localises to the nucleus. One of the multiple factors required for polyadenylation and 3'-end cleavage of pre-mRNAs. Required for the targeted 3' processing of antisense transcripts that triggers transcriptional silencing of the corresponding sense gene. This chain is Cleavage stimulation factor subunit 77, found in Arabidopsis thaliana (Mouse-ear cress).